The primary structure comprises 232 residues: 5'-methylthioadenosine/S-adenosylhomocysteine nucleosidase (232 aa).

Glu-12 serves as the catalytic Proton acceptor. Substrate-binding positions include Gly-78, Met-153, and 174-175 (ME). Asp-198 functions as the Proton donor in the catalytic mechanism.

Belongs to the PNP/UDP phosphorylase family. MtnN subfamily.

The enzyme catalyses S-adenosyl-L-homocysteine + H2O = S-(5-deoxy-D-ribos-5-yl)-L-homocysteine + adenine. It catalyses the reaction S-methyl-5'-thioadenosine + H2O = 5-(methylsulfanyl)-D-ribose + adenine. The catalysed reaction is 5'-deoxyadenosine + H2O = 5-deoxy-D-ribose + adenine. The protein operates within amino-acid biosynthesis; L-methionine biosynthesis via salvage pathway; S-methyl-5-thio-alpha-D-ribose 1-phosphate from S-methyl-5'-thioadenosine (hydrolase route): step 1/2. Functionally, catalyzes the irreversible cleavage of the glycosidic bond in both 5'-methylthioadenosine (MTA) and S-adenosylhomocysteine (SAH/AdoHcy) to adenine and the corresponding thioribose, 5'-methylthioribose and S-ribosylhomocysteine, respectively. Also cleaves 5'-deoxyadenosine, a toxic by-product of radical S-adenosylmethionine (SAM) enzymes, into 5-deoxyribose and adenine. The chain is 5'-methylthioadenosine/S-adenosylhomocysteine nucleosidase from Geobacillus sp. (strain WCH70).